The primary structure comprises 416 residues: Leu/Ile/Val-binding protein homolog 4 (416 aa).

The signal sequence occupies residues 1 to 26; the sequence is MSLKVFLQAGVACAALSLAGAAGASA.

It belongs to the leucine-binding protein family.

Component of an amino-acid transport system. This Brucella melitensis biotype 1 (strain ATCC 23456 / CCUG 17765 / NCTC 10094 / 16M) protein is Leu/Ile/Val-binding protein homolog 4.